Consider the following 177-residue polypeptide: Endoribonuclease YbeY (177 aa).

His-118, His-122, and His-128 together coordinate Zn(2+).

Belongs to the endoribonuclease YbeY family. Zn(2+) is required as a cofactor.

The protein resides in the cytoplasm. Its function is as follows. Single strand-specific metallo-endoribonuclease involved in late-stage 70S ribosome quality control and in maturation of the 3' terminus of the 16S rRNA. In Mycolicibacterium paratuberculosis (strain ATCC BAA-968 / K-10) (Mycobacterium paratuberculosis), this protein is Endoribonuclease YbeY.